The primary structure comprises 311 residues: Thioredoxin reductase (311 aa).

Residues 31-39 (FEKGMPGGQ) and 32-39 (EKGMPGGQ) each bind FAD. A disulfide bridge links Cys-133 with Cys-136. 281-290 (DIRIFAPKQV) contacts FAD.

Belongs to the class-II pyridine nucleotide-disulfide oxidoreductase family. Homodimer. FAD serves as cofactor.

It localises to the cytoplasm. The catalysed reaction is [thioredoxin]-dithiol + NADP(+) = [thioredoxin]-disulfide + NADPH + H(+). This chain is Thioredoxin reductase (trxB), found in Helicobacter pylori (strain J99 / ATCC 700824) (Campylobacter pylori J99).